We begin with the raw amino-acid sequence, 413 residues long: uncharacterized protein (413 aa).

The chain crosses the membrane as a helical span at residues 25 to 47; it reads IVNLSALLPLITSTTSTAGSIIT.

Its subcellular location is the host membrane. This is an uncharacterized protein from Acidianus sp. F28 (AFV-2).